The following is a 285-amino-acid chain: Seed agglutinin 2 (285 aa).

Residues 1-31 form the signal peptide; it reads MASYKFKTQNSFLLLLSISFFFLLLLNKVNS. N-linked (GlcNAc...) asparagine glycosylation is present at Asn147. 2 residues coordinate Mn(2+): Glu156 and Asp158. Ca(2+)-binding residues include Asp158, Asn162, and Asp166. Residues Asp166 and His171 each contribute to the Mn(2+) site.

It belongs to the leguminous lectin family. In terms of assembly, homotetramer. Mostly found in non-glycosylated form. Expressed in seed.

Functionally, seed lectin. The chain is Seed agglutinin 2 from Robinia pseudoacacia (Black locust).